The chain runs to 527 residues: Organic cation/carnitine transporter 2 (527 aa).

The Cytoplasmic portion of the chain corresponds to 1–27 (MAEPTQPLLTDSNSSSPRSLDDTIESY). Residues 28-48 (IGSFGWAQFLQAALVSFSGVF) form a helical membrane-spanning segment. Over 49–119 (DAQQTFISVF…SFVKGLPESS (71 aa)) the chain is Extracellular. The helical transmembrane segment at 120–140 (FFVGCLIGGLVLSTLADSSLG) threads the bilayer. The Cytoplasmic segment spans residues 141–149 (RKNMLFLSC). Residues 150-170 (LVMAISTMLTVFSPNIWVYAV) form a helical membrane-spanning segment. Topologically, residues 171–176 (LRFVNG) are extracellular. A helical transmembrane segment spans residues 177–195 (FGRATIGTCALVLSTELVG). Residue 190–197 (STELVGKK) coordinates ATP. Residues 196-201 (KKWRGR) lie on the Cytoplasmic side of the membrane. The helical transmembrane segment at 202 to 222 (VGIMSFFGFMLGFLSLPLMAY) threads the bilayer. Over 223-230 (MNRGSSWR) the chain is Extracellular. A helical transmembrane segment spans residues 231–251 (ILYAWTSIPTIIYCVLVRFFV). At 252–326 (CESPRWLFVR…LVEKRWALKR (75 aa)) the chain is on the cytoplasmic side. Residues 327–347 (LSAVMAIAFGIGLVYYGMPLA) traverse the membrane as a helical segment. Residues 348–356 (LSNLDFNIY) lie on the Extracellular side of the membrane. A helical membrane pass occupies residues 357–377 (LSAAFNALMDLPANLITLFLV). At 378–385 (DKLSRRNA) the chain is on the cytoplasmic side. The chain crosses the membrane as a helical span at residues 386-406 (LIGFTALGGVSSVLIFALHNM). At 407 to 415 (RIGNHGALQ) the chain is on the extracellular side. A helical transmembrane segment spans residues 416–436 (LALELISYFSACSAFNMEMIY). Over 437-448 (TIELFPTCVRNS) the chain is Cytoplasmic. The helical transmembrane segment at 449 to 469 (AIAMARQALVLGGVFSPIMVA) threads the bilayer. At 470–475 (AGRKNA) the chain is on the extracellular side. Residues 476-496 (FWSFGLFGLAIGLLGLFAVGL) form a helical membrane-spanning segment. At 497 to 527 (PETRGSDLCDTMDEEECKDRRSKVAVNNVIA) the chain is on the cytoplasmic side.

The protein belongs to the major facilitator (TC 2.A.1) superfamily. Organic cation transporter (TC 2.A.1.19) family. In terms of tissue distribution, weakly expressed in roots, including tips and initiation site of lateral roots, siliques and flowers, especially in pollen and stigma.

It localises to the vacuole membrane. Functionally, high affinity carnitine transporter involved in the active cellular uptake of carnitine. Also transports organic cations. This chain is Organic cation/carnitine transporter 2 (OCT2), found in Arabidopsis thaliana (Mouse-ear cress).